The sequence spans 262 residues: NAC domain-containing protein 71 (262 aa).

The NAC domain maps to 6–160 (LPPGFRFHPT…AFALCRVVKK (155 aa)). The DNA-binding element occupies 107 to 166 (AGYRKTLVFYEGRAPLGDRTNWFMHEYRLCDIDDHSQKSPNFKGAFALCRVVKKNELKKN).

It localises to the nucleus. Transcription factor involved in tissue reunion of wounded inflorescence stems. Required for the division of pith cells in the reunion process, which is dependent on polar-transported auxin and the wound-inducible hormones ethylene and jasmonate. Binds to the promoters of XTH19 and XTH20 to induce their expression via auxin signaling. XTH19 and XTH20 are involved in cell proliferation in the tissue reunion process of incised stems. Involved in hypocotyl graft union formation. Required for the auxin- mediated promotion of vascular tissue proliferation during hypocotyl graft attachment. The protein is NAC domain-containing protein 71 of Arabidopsis thaliana (Mouse-ear cress).